A 93-amino-acid chain; its full sequence is uncharacterized protein (93 aa).

A helical transmembrane segment spans residues 20–40; that stretch reads VYIYLCFSLMTIALICYLIHI. An N-linked (GlcNAc...) asparagine; by host glycan is attached at Asn78.

This sequence belongs to the asfivirus KP93L family.

The protein localises to the host membrane. This is an uncharacterized protein from Ornithodoros (relapsing fever ticks).